A 51-amino-acid chain; its full sequence is Mitochondrial import receptor subunit TOM5 homolog (51 aa).

Position 1 is an N-acetylmethionine (Met-1). Lys-10 participates in a covalent cross-link: Glycyl lysine isopeptide (Lys-Gly) (interchain with G-Cter in SUMO2). A helical membrane pass occupies residues 27-45; the sequence is SIRNFLIYVALLRVTPYIL.

The protein belongs to the Tom5 family. As to quaternary structure, forms part of the preprotein translocase complex of the outer mitochondrial membrane (TOM complex) which consists of at least 7 different proteins (TOMM5, TOMM6, TOMM7, TOMM20, TOMM22, TOMM40 and TOMM70).

It localises to the mitochondrion outer membrane. This chain is Mitochondrial import receptor subunit TOM5 homolog, found in Mus musculus (Mouse).